The sequence spans 348 residues: MRAAPFDFFFQSTALSTFFILCSLATNEIPTISGAPAGKIVQPPKPNILKQGCPSDLLHSRALRSIQLACRTHPATVISAFEGVQEGLQNCANRLRFQQWDCSEAGNIMHDPPLLRQGFRESSLIWALSSASAAWGVATACAQGWIDDCACNNQMGQNEYEFGGCTHGVQHGITASRKLLTKVGAVNTLLRKVEKHNLKAGRLAIKKTLISSCKCHGVSGSCQQKTCWKRTATLEHITDYLVEKYARAKLYTDDSVVKTTDLIYLEASPDVCKAKSVAGRVCAWRNETHTQGDCDRLCCGNGFSIRHEVVRVKCDCEFVWCCNLVCKDCIQHRWISTCNGTPPKSLIF.

The first 25 residues, 1–25, serve as a signal peptide directing secretion; that stretch reads MRAAPFDFFFQSTALSTFFILCSLA. Disulfide bonds link C91–C102, C141–C149, C151–C165, C213–C227, C215–C222, C272–C299, C282–C294, C298–C338, C314–C329, C316–C326, and C321–C322. Residue S219 is the site of O-palmitoleoyl serine; by mom-1 attachment. A glycan (N-linked (GlcNAc...) asparagine) is linked at N286.

It belongs to the Wnt family. Palmitoleoylation is required for efficient binding to frizzled receptors. Depalmitoleoylation leads to Wnt signaling pathway inhibition. As to expression, expressed in the tail hypodermis.

It localises to the secreted. Its subcellular location is the extracellular space. The protein resides in the extracellular matrix. Ligand for members of the frizzled family of seven transmembrane receptors. Affects male tail development, vulval precursor cell specification and egg laying. Involved in morphogenesis by influencing polarity of asymmetric cell divisions of the B, U, and F cells in the male, and the T cell in males and hermaphrodites. Controls spindle orientation in B-gamma cell division during male copulatory spicule development. Involved in specification of the P7.p lineage during vulval development. Has a role in providing polarity and default lin-17 localization in axon development and positioning of neuromuscular synapses in DA9 regions by negatively regulating synaptogenesis. Plays a role in motorneuron development by promoting the extension of the anterior neurite of ventral D-type GABAergic motorneurons along the anterior-posterior axis of the ventral nerve cord. Positively regulates cilium position and dendrite morphogenesis in postembryonic PQR gas-sensing neurons. This is likely through regulating the localization of grdn-1 to the distal dendrites of PQR sensory neurons. In Caenorhabditis elegans, this protein is Abnormal cell lineage protein 44.